A 494-amino-acid polypeptide reads, in one-letter code: Aspartyl/glutamyl-tRNA(Asn/Gln) amidotransferase subunit B (494 aa).

This sequence belongs to the GatB/GatE family. GatB subfamily. As to quaternary structure, heterotrimer of A, B and C subunits.

It catalyses the reaction L-glutamyl-tRNA(Gln) + L-glutamine + ATP + H2O = L-glutaminyl-tRNA(Gln) + L-glutamate + ADP + phosphate + H(+). The catalysed reaction is L-aspartyl-tRNA(Asn) + L-glutamine + ATP + H2O = L-asparaginyl-tRNA(Asn) + L-glutamate + ADP + phosphate + 2 H(+). Allows the formation of correctly charged Asn-tRNA(Asn) or Gln-tRNA(Gln) through the transamidation of misacylated Asp-tRNA(Asn) or Glu-tRNA(Gln) in organisms which lack either or both of asparaginyl-tRNA or glutaminyl-tRNA synthetases. The reaction takes place in the presence of glutamine and ATP through an activated phospho-Asp-tRNA(Asn) or phospho-Glu-tRNA(Gln). The polypeptide is Aspartyl/glutamyl-tRNA(Asn/Gln) amidotransferase subunit B (Protochlamydia amoebophila (strain UWE25)).